The following is a 185-amino-acid chain: Ribosome-recycling factor (185 aa).

This sequence belongs to the RRF family.

The protein resides in the cytoplasm. Responsible for the release of ribosomes from messenger RNA at the termination of protein biosynthesis. May increase the efficiency of translation by recycling ribosomes from one round of translation to another. This is Ribosome-recycling factor from Pseudomonas paraeruginosa (strain DSM 24068 / PA7) (Pseudomonas aeruginosa (strain PA7)).